Reading from the N-terminus, the 207-residue chain is Large ribosomal subunit protein uL4 (207 aa).

The segment at 50–76 (AVKNRSAVSGGGRKPWKQKGTGRARQG) is disordered.

It belongs to the universal ribosomal protein uL4 family. As to quaternary structure, part of the 50S ribosomal subunit.

Functionally, one of the primary rRNA binding proteins, this protein initially binds near the 5'-end of the 23S rRNA. It is important during the early stages of 50S assembly. It makes multiple contacts with different domains of the 23S rRNA in the assembled 50S subunit and ribosome. In terms of biological role, forms part of the polypeptide exit tunnel. The sequence is that of Large ribosomal subunit protein uL4 from Macrococcus caseolyticus (strain JCSC5402) (Macrococcoides caseolyticum).